The primary structure comprises 286 residues: MSLSFQKYQGLGNDFLLIDNRHQEELLLTPEQAQFWCDRHFGVGADGVIFLLRGTGESDYRMRMYNADGSVAQMCGNGIRCLAKFIFALEGRSAGEIVRYRIDTLAGLIVPEVQADGQVTVDMGKPRLLAQQIPTTLAAADQKVVDVPLTVGDRQWLVTCVSMGNPHCVTFVEDVAALDLAVLGPQFEHHPAFPQRTNTEFVQVLGSDRLRMRVWERGAGMTLACGTGACATLVAAVLTGCLSPGGDQAQATVELPGGDLQIRWDLPSQHLYMTGPALAVFSGTLP.

The substrate site is built by Asn-13 and Asn-66. Cys-75 acts as the Proton donor in catalysis. Residues 76–77, Asn-165, Asn-198, and 216–217 each bind substrate; these read GN and ER. Residue Cys-225 is the Proton acceptor of the active site. 226–227 serves as a coordination point for substrate; sequence GT.

Belongs to the diaminopimelate epimerase family. As to quaternary structure, homodimer.

The protein localises to the cytoplasm. It carries out the reaction (2S,6S)-2,6-diaminopimelate = meso-2,6-diaminopimelate. It functions in the pathway amino-acid biosynthesis; L-lysine biosynthesis via DAP pathway; DL-2,6-diaminopimelate from LL-2,6-diaminopimelate: step 1/1. Catalyzes the stereoinversion of LL-2,6-diaminopimelate (L,L-DAP) to meso-diaminopimelate (meso-DAP), a precursor of L-lysine and an essential component of the bacterial peptidoglycan. This chain is Diaminopimelate epimerase, found in Thermosynechococcus vestitus (strain NIES-2133 / IAM M-273 / BP-1).